A 434-amino-acid chain; its full sequence is Trigger factor (434 aa).

One can recognise a PPIase FKBP-type domain in the interval 161 to 246 (EDRVTVDFNG…LKKVEERELP (86 aa)).

This sequence belongs to the FKBP-type PPIase family. Tig subfamily.

The protein resides in the cytoplasm. The catalysed reaction is [protein]-peptidylproline (omega=180) = [protein]-peptidylproline (omega=0). In terms of biological role, involved in protein export. Acts as a chaperone by maintaining the newly synthesized protein in an open conformation. Functions as a peptidyl-prolyl cis-trans isomerase. This Proteus mirabilis (strain HI4320) protein is Trigger factor.